The primary structure comprises 157 residues: Crossover junction endodeoxyribonuclease RuvC (157 aa).

Catalysis depends on residues aspartate 7, glutamate 67, and aspartate 140. Mg(2+) is bound by residues aspartate 7, glutamate 67, and aspartate 140.

This sequence belongs to the RuvC family. As to quaternary structure, homodimer which binds Holliday junction (HJ) DNA. The HJ becomes 2-fold symmetrical on binding to RuvC with unstacked arms; it has a different conformation from HJ DNA in complex with RuvA. In the full resolvosome a probable DNA-RuvA(4)-RuvB(12)-RuvC(2) complex forms which resolves the HJ. Requires Mg(2+) as cofactor.

It localises to the cytoplasm. It carries out the reaction Endonucleolytic cleavage at a junction such as a reciprocal single-stranded crossover between two homologous DNA duplexes (Holliday junction).. In terms of biological role, the RuvA-RuvB-RuvC complex processes Holliday junction (HJ) DNA during genetic recombination and DNA repair. Endonuclease that resolves HJ intermediates. Cleaves cruciform DNA by making single-stranded nicks across the HJ at symmetrical positions within the homologous arms, yielding a 5'-phosphate and a 3'-hydroxyl group; requires a central core of homology in the junction. The consensus cleavage sequence is 5'-(A/T)TT(C/G)-3'. Cleavage occurs on the 3'-side of the TT dinucleotide at the point of strand exchange. HJ branch migration catalyzed by RuvA-RuvB allows RuvC to scan DNA until it finds its consensus sequence, where it cleaves and resolves the cruciform DNA. This chain is Crossover junction endodeoxyribonuclease RuvC, found in Rickettsia rickettsii (strain Iowa).